Consider the following 421-residue polypeptide: Odorant receptor 67b (421 aa).

Topologically, residues 1 to 48 are cytoplasmic; it reads MQDQLDHELERIDKLPKLGLLWVEYSAYALGVNIAPRKRSSKYCRLTR. A helical membrane pass occupies residues 49 to 69; the sequence is ILVLIVNLSIIYSLVAFIMEN. Topologically, residues 70 to 71 are extracellular; the sequence is YM. Residues 72–92 traverse the membrane as a helical segment; sequence ISFETYVEAVLLTFQLSVGVV. Residues 93-151 lie on the Cytoplasmic side of the membrane; the sequence is KMFHFQNKVESCSQLVFSTETGEVLKSLGLFQLDLPRKKELLSSVSLILLNNWMIIDRQ. A helical membrane pass occupies residues 152–172; that stretch reads VMFFFKIVCMPVLYYCVRPYF. Over 173-217 the chain is Extracellular; sequence QYIFDCYIKDKDTCEMTLTYPAIVPYLQLGNYEFPSYVIRFFLLQ. The chain crosses the membrane as a helical span at residues 218–238; that stretch reads SGPLWCFFAVFGFNSLFVVLT. Topologically, residues 239 to 289 are cytoplasmic; it reads RYESGLIKVLRFLVQNSTSDILVPKDQRVKYLQCCVRLFARISSHHNQIEN. A helical membrane pass occupies residues 290–310; the sequence is LFKYIILVQCSVSSILICMLL. Residues 311-315 lie on the Extracellular side of the membrane; that stretch reads YKIST. A helical membrane pass occupies residues 316–336; it reads VLEVGWVWMGMIMVYFVTIAL. The Cytoplasmic segment spans residues 337 to 384; that stretch reads EITLYNVSAQKVESQSELLFHDWYNCSWYNESREFKFMIKMMLLFSRR. Residues 385-405 form a helical membrane-spanning segment; that stretch reads TFVLSVGGFTSLSHKFLVQVF. The Extracellular segment spans residues 406-421; the sequence is RLSANFFLLLRNMNNK.

It belongs to the insect chemoreceptor superfamily. Heteromeric odorant receptor channel (TC 1.A.69) family. Or63a subfamily. As to quaternary structure, interacts with Orco. Complexes exist early in the endomembrane system in olfactory sensory neurons (OSNs), coupling these complexes to the conserved ciliary trafficking pathway.

Its subcellular location is the cell membrane. Odorant receptor which mediates acceptance or avoidance behavior, depending on its substrates. The odorant receptor repertoire encodes a large collection of odor stimuli that vary widely in identity, intensity, and duration. May form a complex with Orco to form odorant-sensing units, providing sensitive and prolonged odorant signaling and calcium permeability. Involved in the behavioral responses to ethyl acetate, pentyl acetate, methyl caproate, anisole, heptanal, 2-heptanone, r-carvone, nonanoic acid, and pyrazines. This is Odorant receptor 67b (Or67b) from Drosophila melanogaster (Fruit fly).